The chain runs to 404 residues: MSRRSSRLQAKQHAQPNQPDSPQETQIIQAKKRKTAQDVKKRKEEITKKHQYEIRNCWPPVLSGGISPCIIIETPHKEIGTSDFSRFTNYRFKNLFINPSPLPDLSWACSQEVWQNMLQKENRYVHDKHFQVLHSDLEPQMRSILLDWLLEVCEVYTLHRETFYLAQDFFDRFMLTQKDVNKNMLQLIGITSLFIASKLEEIYAPKLQEFAYVTDGACSEVDILKMELNILKALKWELCPVTVISWLNLFLQVDAVKDVPKVLLPQYSQETFIQIAQLLDLCILAIDSLEFQYRILAAAALCHFTSIEVVKKASGLEWDDISECVDWMVPFVSVVKSVSPVKLKTFKKIPMEDRHNIQTHTNYLALLNEVNYVNIYRKGGQLSPVCNGGIMTPPKSTEKPPGKH.

Positions 1 to 41 are disordered; that stretch reads MSRRSSRLQAKQHAQPNQPDSPQETQIIQAKKRKTAQDVKK. The span at 7-28 shows a compositional bias: polar residues; that stretch reads RLQAKQHAQPNQPDSPQETQII. S21 carries the phosphoserine modification. At K348 the chain carries N6-lactoyllysine. Residue S383 is modified to Phosphoserine. Position 392 is a phosphothreonine (T392).

Belongs to the cyclin family. Cyclin E subfamily. Interacts with the CDK2 (in vivo) and CDK3 (in vitro) protein kinases to form a serine/threonine kinase holoenzyme complex. The cyclin subunit imparts substrate specificity to the complex. In terms of processing, phosphorylation by CDK2 triggers its release from CDK2 and degradation via the ubiquitin proteasome pathway. Lactylated at Lys-348. Delactylated by SIRT3. Highest levels in adult testis, thymus and brain. Lower levels in placenta, spleen and colon.

The protein resides in the nucleus. Functionally, essential for the control of the cell cycle at the late G1 and early S phase. The polypeptide is G1/S-specific cyclin-E2 (Ccne2) (Mus musculus (Mouse)).